Reading from the N-terminus, the 1107-residue chain is uncharacterized protein (1107 aa).

The span at 180 to 204 (SGNGSSGGNNNNNNNSLNNSNNSIG) shows a compositional bias: low complexity. 2 disordered regions span residues 180-251 (SGNG…SGNN) and 501-530 (LMNINNNNNNNNSNNNNNNNDQNKDKDNQM). The segment covering 205–215 (SSGGNGGGGSN) has biased composition (gly residues). Polar residues predominate over residues 219–237 (PSMSPQFTSISKTNSPQII). Composition is skewed to low complexity over residues 238–251 (NTSSNNLNSSSGNN) and 501–521 (LMNINNNNNNNNSNNNNNNND). 2 coiled-coil regions span residues 789–816 (KKDIIEHLTQRHNQYQSNINEDEQIYRE) and 940–1012 (NIDH…NMLK).

This is an uncharacterized protein from Dictyostelium discoideum (Social amoeba).